Here is a 232-residue protein sequence, read N- to C-terminus: 2-C-methyl-D-erythritol 4-phosphate cytidylyltransferase (232 aa).

It belongs to the IspD/TarI cytidylyltransferase family. IspD subfamily.

It carries out the reaction 2-C-methyl-D-erythritol 4-phosphate + CTP + H(+) = 4-CDP-2-C-methyl-D-erythritol + diphosphate. It functions in the pathway isoprenoid biosynthesis; isopentenyl diphosphate biosynthesis via DXP pathway; isopentenyl diphosphate from 1-deoxy-D-xylulose 5-phosphate: step 2/6. Catalyzes the formation of 4-diphosphocytidyl-2-C-methyl-D-erythritol from CTP and 2-C-methyl-D-erythritol 4-phosphate (MEP). The chain is 2-C-methyl-D-erythritol 4-phosphate cytidylyltransferase from Bacillus velezensis (strain DSM 23117 / BGSC 10A6 / LMG 26770 / FZB42) (Bacillus amyloliquefaciens subsp. plantarum).